Reading from the N-terminus, the 518-residue chain is Protein nucleotidyltransferase YdiU (518 aa).

Glycine 109, glycine 111, arginine 112, lysine 131, aspartate 143, glycine 144, arginine 194, and arginine 201 together coordinate ATP. The active-site Proton acceptor is the aspartate 270. Residues asparagine 271 and aspartate 280 each contribute to the Mg(2+) site. Aspartate 280 lines the ATP pocket.

The protein belongs to the SELO family. Requires Mg(2+) as cofactor. Mn(2+) is required as a cofactor.

The enzyme catalyses L-seryl-[protein] + ATP = 3-O-(5'-adenylyl)-L-seryl-[protein] + diphosphate. It catalyses the reaction L-threonyl-[protein] + ATP = 3-O-(5'-adenylyl)-L-threonyl-[protein] + diphosphate. It carries out the reaction L-tyrosyl-[protein] + ATP = O-(5'-adenylyl)-L-tyrosyl-[protein] + diphosphate. The catalysed reaction is L-histidyl-[protein] + UTP = N(tele)-(5'-uridylyl)-L-histidyl-[protein] + diphosphate. The enzyme catalyses L-seryl-[protein] + UTP = O-(5'-uridylyl)-L-seryl-[protein] + diphosphate. It catalyses the reaction L-tyrosyl-[protein] + UTP = O-(5'-uridylyl)-L-tyrosyl-[protein] + diphosphate. Its function is as follows. Nucleotidyltransferase involved in the post-translational modification of proteins. It can catalyze the addition of adenosine monophosphate (AMP) or uridine monophosphate (UMP) to a protein, resulting in modifications known as AMPylation and UMPylation. This Paraburkholderia xenovorans (strain LB400) protein is Protein nucleotidyltransferase YdiU.